We begin with the raw amino-acid sequence, 87 residues long: UPF0213 protein SYNAS_10430 (87 aa).

A GIY-YIG domain is found at 2–78 (SKNYVYILEC…KKMSRAEKLQ (77 aa)).

The protein belongs to the UPF0213 family.

The protein is UPF0213 protein SYNAS_10430 of Syntrophus aciditrophicus (strain SB).